Reading from the N-terminus, the 355-residue chain is Phenylalanine--tRNA ligase alpha subunit (355 aa).

Glu-273 serves as a coordination point for Mg(2+).

It belongs to the class-II aminoacyl-tRNA synthetase family. Phe-tRNA synthetase alpha subunit type 1 subfamily. Tetramer of two alpha and two beta subunits. The cofactor is Mg(2+).

Its subcellular location is the cytoplasm. It catalyses the reaction tRNA(Phe) + L-phenylalanine + ATP = L-phenylalanyl-tRNA(Phe) + AMP + diphosphate + H(+). The protein is Phenylalanine--tRNA ligase alpha subunit of Bifidobacterium animalis subsp. lactis (strain AD011).